We begin with the raw amino-acid sequence, 253 residues long: Triosephosphate isomerase (253 aa).

A substrate-binding site is contributed by 13 to 15 (NWK). The active-site Electrophile is His-100. Glu-169 functions as the Proton acceptor in the catalytic mechanism. Substrate is bound by residues Gly-175, Ser-208, and 229–230 (GG).

This sequence belongs to the triosephosphate isomerase family. Homodimer.

The protein localises to the cytoplasm. It carries out the reaction D-glyceraldehyde 3-phosphate = dihydroxyacetone phosphate. Its pathway is carbohydrate biosynthesis; gluconeogenesis. It functions in the pathway carbohydrate degradation; glycolysis; D-glyceraldehyde 3-phosphate from glycerone phosphate: step 1/1. In terms of biological role, involved in the gluconeogenesis. Catalyzes stereospecifically the conversion of dihydroxyacetone phosphate (DHAP) to D-glyceraldehyde-3-phosphate (G3P). The chain is Triosephosphate isomerase from Synechococcus sp. (strain RCC307).